A 236-amino-acid polypeptide reads, in one-letter code: E3 ubiquitin-protein ligase RNF187 (236 aa).

An RING-type zinc finger spans residues cysteine 12–alanine 53. An asymmetric dimethylarginine; by PRMT1 mark is found at arginine 98 and arginine 109. Lysine 195 is covalently cross-linked (Glycyl lysine isopeptide (Lys-Gly) (interchain with G-Cter in ubiquitin)). Serine 200 bears the Phosphoserine mark. Glycyl lysine isopeptide (Lys-Gly) (interchain with G-Cter in ubiquitin) cross-links involve residues lysine 224 and lysine 225.

In terms of assembly, homodimer. Interacts with JUN, independently of JUN phosphorylation. Interacts (via C-terminus) with TRIM7. Ubiquitinated; undergoes 'Lys-48'-linked autoubiquitination in the absence of growth factors and MAP3K1-induced 'Lys-63'-linked polyubiquitination. 'Lys-48'-autoubiquitination leads to degradation by the proteasome, while MAP3K1-induced 'Lys-63'-linked polyubiquitination results in the stabilization of the protein. 'Lys-48'- and 'Lys-63'-linked polyubiquitinations occur most probably on the same 3 C-terminal lysine residues (Lys-195, Lys-224 and Lys-225) and are thus mutually exclusive. Other sites of ubiquitination are not excluded. 'Lys-63'-linked polyubiquitination by TRIM7 in response to growth factor signaling via the MEK/ERK pathway enhances protein stability. Post-translationally, arginine methylation by PRMT1 stabilizes RNF187 by facilitating K63-linked ubiquitin chain formation, and enables dimerization, c-Jun interaction and subsequent AP1 target gene expression.

It localises to the cytoplasm. Its subcellular location is the nucleus. It catalyses the reaction S-ubiquitinyl-[E2 ubiquitin-conjugating enzyme]-L-cysteine + [acceptor protein]-L-lysine = [E2 ubiquitin-conjugating enzyme]-L-cysteine + N(6)-ubiquitinyl-[acceptor protein]-L-lysine.. The protein operates within protein modification; protein ubiquitination. Functionally, E3 ubiquitin-protein ligase that acts as a coactivator of JUN-mediated gene activation in response to growth factor signaling via the MAP3K1 pathway, independently from MAPK8. This chain is E3 ubiquitin-protein ligase RNF187 (Rnf187), found in Mus musculus (Mouse).